The sequence spans 239 residues: Ribonuclease P protein component 3 (239 aa).

It belongs to the eukaryotic/archaeal RNase P protein component 3 family. In terms of assembly, consists of a catalytic RNA component and at least 4-5 protein subunits.

The protein localises to the cytoplasm. The enzyme catalyses Endonucleolytic cleavage of RNA, removing 5'-extranucleotides from tRNA precursor.. In terms of biological role, part of ribonuclease P, a protein complex that generates mature tRNA molecules by cleaving their 5'-ends. The sequence is that of Ribonuclease P protein component 3 from Methanosarcina acetivorans (strain ATCC 35395 / DSM 2834 / JCM 12185 / C2A).